The following is a 93-amino-acid chain: Small ribosomal subunit protein uS15 (93 aa).

It belongs to the universal ribosomal protein uS15 family. Part of the 30S ribosomal subunit. Forms a bridge to the 50S subunit in the 70S ribosome, contacting the 23S rRNA.

Its function is as follows. One of the primary rRNA binding proteins, it binds directly to 16S rRNA where it helps nucleate assembly of the platform of the 30S subunit by binding and bridging several RNA helices of the 16S rRNA. In terms of biological role, forms an intersubunit bridge (bridge B4) with the 23S rRNA of the 50S subunit in the ribosome. This chain is Small ribosomal subunit protein uS15, found in Ehrlichia canis (strain Jake).